The chain runs to 127 residues: Holo-[acyl-carrier-protein] synthase (127 aa).

Residues D8 and E56 each contribute to the Mg(2+) site.

This sequence belongs to the P-Pant transferase superfamily. AcpS family. It depends on Mg(2+) as a cofactor.

The protein localises to the cytoplasm. The catalysed reaction is apo-[ACP] + CoA = holo-[ACP] + adenosine 3',5'-bisphosphate + H(+). Its function is as follows. Transfers the 4'-phosphopantetheine moiety from coenzyme A to a Ser of acyl-carrier-protein. The sequence is that of Holo-[acyl-carrier-protein] synthase from Cytophaga hutchinsonii (strain ATCC 33406 / DSM 1761 / CIP 103989 / NBRC 15051 / NCIMB 9469 / D465).